A 319-amino-acid chain; its full sequence is tRNA uridine(34) hydroxylase (319 aa).

The region spanning 124–218 is the Rhodanese domain; it reads LDEDTVILDA…YGKNEETKGE (95 aa). Cysteine 178 acts as the Cysteine persulfide intermediate in catalysis.

It belongs to the TrhO family.

The catalysed reaction is uridine(34) in tRNA + AH2 + O2 = 5-hydroxyuridine(34) in tRNA + A + H2O. Functionally, catalyzes oxygen-dependent 5-hydroxyuridine (ho5U) modification at position 34 in tRNAs. The chain is tRNA uridine(34) hydroxylase from Listeria welshimeri serovar 6b (strain ATCC 35897 / DSM 20650 / CCUG 15529 / CIP 8149 / NCTC 11857 / SLCC 5334 / V8).